The chain runs to 1185 residues: Mucin-6 (1185 aa).

2 disulfides stabilise this stretch: cysteine 1-cysteine 132 and cysteine 23-cysteine 168. In terms of domain architecture, VWFD 1 spans 1–169 (CSTWGGGHFS…KMDDPSEICL (169 aa)). Asparagine 223 is a glycosylation site (N-linked (GlcNAc...) (complex) asparagine). Residues 257–312 (CSANQIYEECGSPCIKTCSNPEYSCSSHCTYGCFCPEGTVLDDISKNRTCVHLEQC) form the TIL 1 domain. In terms of domain architecture, VWFD 2 spans 350-534 (GRCSLEGGSF…AMERETDPCA (185 aa)). Disulfide bonds link cysteine 352–cysteine 488 and cysteine 374–cysteine 533. 2 TIL domains span residues 619-676 (CTGN…KSHC) and 737-782 (GATC…PEEC). The VWFD 3 domain occupies 821-993 (STCNLYGEGH…NSWKENPLCG (173 aa)). Cystine bridges form between cysteine 823/cysteine 957, cysteine 845/cysteine 992, cysteine 854/cysteine 954, and cysteine 872/cysteine 879. N-linked (GlcNAc...) (complex) asparagine glycosylation is present at asparagine 930. Over residues 1160–1178 (PTATQPTSPSTSSASTVLT) the composition is skewed to low complexity. Residues 1160–1185 (PTATQPTSPSTSSASTVLTETTNPPV) form a disordered region.

In terms of assembly, multimer; disulfide-linked. In terms of processing, N-glycosylated with N-acetylglucosamine (6.7%), N-acetylgalactosamine (0.6%), galactose (1.8%), mannose (4.6%), N-acetylneuraminic acid (1.0%) and sulfate-containing glycans (0.7%).

The protein localises to the secreted. Ovomucin, the glycoprotein responsible for the gel properties of egg white, is composed for 2 subunits, alpha-ovomucin/MUC5B and beta-ovomucin/MUC6. The chain is Mucin-6 (MUC6) from Gallus gallus (Chicken).